A 389-amino-acid polypeptide reads, in one-letter code: MYKTKGGFQLTLQTLSLVVGFMAWSIIAPLMPFIKQDVNVTEGQISIILAIPVILGSVLRVPFGYLTNIVGAKWVFFTSFIVLLFPIFFLSQAQTPGMLMASGFFLGVGGAIFSVGVTSVPKYFPKEKVGLANGIYGMGNIGTAVSSFLAPPIAGIIGWQTTVRSYLIIIALFALIMFIFGDTQERKIKVPLMAQMKTLSKNYKLYYLSYWYFITFGAFVAFGIFLPNYLVNHFGIDKVDAGIRSGVFIALATFLRPIGGILGDKFNAVKVLMIDFVVMIIGAIILGISDHIALFTVGCLTISICAGIGNGLIFKLVPSYFSNEAGSANGIVSMMGGLGGFFPPLVITYVANLTGSSHLAFIFLAVFGCIALFTMRHLYQKEYGSLKNG.

The next 12 membrane-spanning stretches (helical) occupy residues 14 to 34 (TLSL…MPFI), 45 to 65 (ISII…PFGY), 69 to 89 (IVGA…PIFF), 97 to 117 (GMLM…SVGV), 139 to 159 (GNIG…IIGW), 161 to 181 (TTVR…FIFG), 211 to 231 (WYFI…NYLV), 246 to 266 (GVFI…GDKF), 268 to 288 (AVKV…ILGI), 294 to 314 (LFTV…GLIF), 331 to 351 (IVSM…TYVA), and 353 to 373 (LTGS…IALF).

It belongs to the major facilitator superfamily. Nitrate/nitrite porter (TC 2.A.1.8) family.

It is found in the cell membrane. Probably required for nitrate uptake under anoxic conditions. Also possibly involved in excretion of nitrite produced by the dissimilatory reduction of nitrate. The sequence is that of Probable nitrate transporter NarT (narT) from Staphylococcus aureus (strain bovine RF122 / ET3-1).